Reading from the N-terminus, the 375-residue chain is MLKVNNVFGSNPNRMTKLEDEHYFIDDIVSIKNRQKSKMYVREGKRIGHGSFGTVTQSILSSNSIEWLGPYAIKRVVKSPKVQSLELEILQNIRHPNLVTLEFFFESHCTTKDGGHLYQKNFVMEYIPQTLSSEIHEYFDNGSKMPTKHIKLYTFQILRALLTLHSMSICHGDLKPSNILIIPSSGIAKVCDFGSAQRLDDNTELKTYFCSRFYRAPELLLNSKDYTTQIDIWSLGCIIGEMIKGQPLFKGDSANSQLEEIAKLLGRFPKSSIKNSQELQDSLNDQKFKKFMHWFPSIEFFDVEFLLKVLTYDATERCDARQLMAHEFFDALRNETYFLPRGSSMPVHLPDLFNFSASEKRALGEYYNLIVPSLD.

Residues 41-329 (VREGKRIGHG…ARQLMAHEFF (289 aa)) form the Protein kinase domain. ATP contacts are provided by residues 47–55 (IGHGSFGTV) and lysine 74. Aspartate 173 (proton acceptor) is an active-site residue. At serine 211 the chain carries Phosphoserine.

The protein belongs to the protein kinase superfamily. Ser/Thr protein kinase family.

It carries out the reaction L-seryl-[protein] + ATP = O-phospho-L-seryl-[protein] + ADP + H(+). The catalysed reaction is L-threonyl-[protein] + ATP = O-phospho-L-threonyl-[protein] + ADP + H(+). Required for heat stress-instigated phosphorylation of BCY1 which is involved in cell wall integrity signaling. Regulates activity of MSN2, a transcription factor that binds to the stress-response element (STRE). Probably promotes formation of a complex between MSN2 and DNA. Regulates the stability of ROG1. In Saccharomyces cerevisiae (strain ATCC 204508 / S288c) (Baker's yeast), this protein is Glycogen synthase kinase-3 homolog YGK3 (YGK3).